Here is a 632-residue protein sequence, read N- to C-terminus: Tetratricopeptide repeat protein 39B (632 aa).

3 TPR repeats span residues 343–376 (SLVLFYHARIELLKGNLEEAQEVFRKCVSVQEEW), 535–568 (CLVKLLKGCCLKNLQRPLQAELCYNHVVESEKLL), and 576–609 (PFTLFELASLYKSQGEIDKAIKFLETARNNYKDY).

This sequence belongs to the TTC39 family.

Regulates high density lipoprotein (HDL) cholesterol metabolism by promoting the ubiquitination and degradation of the oxysterols receptors LXR (NR1H2 and NR1H3). This Macaca fascicularis (Crab-eating macaque) protein is Tetratricopeptide repeat protein 39B (TTC39B).